The primary structure comprises 60 residues: Putative transcriptional regulator XtpA (60 aa).

Controls the expression of small non-coding RNA GcvB, which represses the expression of many amino acid transporter proteins and uptake of aminoglycoside antibiotics in cells. Might be a transcriptional activator. An RNA (xtr) with a tRNA-like fold possibly derived from tRNA-Arg(UCG) is encoded entirely within the protein; xtr does not have the sequence corresponding to tRNA anticodon or variable arms. 10 synonymous codon changes in the xtr region of xtpA have the same phenotype as a deletion mutation, suggesting the mRNA secondary structure is important for function. In Escherichia coli (strain K12), this protein is Putative transcriptional regulator XtpA.